The sequence spans 134 residues: 6,7-dimethyl-8-ribityllumazine synthase (134 aa).

Residues Phe-12, 44 to 46 (VFD), and 68 to 70 (SVI) contribute to the 5-amino-6-(D-ribitylamino)uracil site. 73–74 (DT) serves as a coordination point for (2S)-2-hydroxy-3-oxobutyl phosphate. The active-site Proton donor is His-76. Leu-101 provides a ligand contact to 5-amino-6-(D-ribitylamino)uracil. Arg-116 is a (2S)-2-hydroxy-3-oxobutyl phosphate binding site.

This sequence belongs to the DMRL synthase family.

It carries out the reaction (2S)-2-hydroxy-3-oxobutyl phosphate + 5-amino-6-(D-ribitylamino)uracil = 6,7-dimethyl-8-(1-D-ribityl)lumazine + phosphate + 2 H2O + H(+). It participates in cofactor biosynthesis; riboflavin biosynthesis; riboflavin from 2-hydroxy-3-oxobutyl phosphate and 5-amino-6-(D-ribitylamino)uracil: step 1/2. Its function is as follows. Catalyzes the formation of 6,7-dimethyl-8-ribityllumazine by condensation of 5-amino-6-(D-ribitylamino)uracil with 3,4-dihydroxy-2-butanone 4-phosphate. This is the penultimate step in the biosynthesis of riboflavin. In Methanosarcina barkeri (strain Fusaro / DSM 804), this protein is 6,7-dimethyl-8-ribityllumazine synthase.